The chain runs to 568 residues: Urease subunit beta (568 aa).

The 438-residue stretch at 131–568 (GGIDTHIHFI…LSLAQLYNLF (438 aa)) folds into the Urease domain. 3 residues coordinate Ni(2+): H136, H138, and K219. K219 carries the N6-carboxylysine modification. H221 is a binding site for substrate. The Ni(2+) site is built by H248 and H274. Catalysis depends on H321, which acts as the Proton donor. D361 contributes to the Ni(2+) binding site.

This sequence belongs to the metallo-dependent hydrolases superfamily. Urease alpha subunit family. In terms of assembly, heterohexamer of 3 UreA (alpha) and 3 UreB (beta) subunits. Ni cation serves as cofactor. In terms of processing, carboxylation allows a single lysine to coordinate two nickel ions.

It localises to the cytoplasm. It catalyses the reaction urea + 2 H2O + H(+) = hydrogencarbonate + 2 NH4(+). It functions in the pathway nitrogen metabolism; urea degradation; CO(2) and NH(3) from urea (urease route): step 1/1. This is Urease subunit beta from Helicobacter heilmannii.